The following is a 634-amino-acid chain: DNA-directed RNA polymerase subunit gamma (634 aa).

Zn(2+) contacts are provided by Cys74, Cys76, Cys89, and Cys92. Positions 471, 473, and 475 each coordinate Mg(2+).

It belongs to the RNA polymerase beta' chain family. RpoC1 subfamily. In terms of assembly, in cyanobacteria the RNAP catalytic core is composed of 2 alpha, 1 beta, 1 beta', 1 gamma and 1 omega subunit. When a sigma factor is associated with the core the holoenzyme is formed, which can initiate transcription. It depends on Mg(2+) as a cofactor. Zn(2+) serves as cofactor.

The enzyme catalyses RNA(n) + a ribonucleoside 5'-triphosphate = RNA(n+1) + diphosphate. Functionally, DNA-dependent RNA polymerase catalyzes the transcription of DNA into RNA using the four ribonucleoside triphosphates as substrates. The sequence is that of DNA-directed RNA polymerase subunit gamma from Prochlorococcus marinus (strain MIT 9303).